We begin with the raw amino-acid sequence, 107 residues long: YcgL domain-containing protein Psyc_0800 (107 aa).

The 95-residue stretch at 1-95 folds into the YcgL domain; the sequence is MHCDIYKFLK…QDVMRRQAEL (95 aa).

The protein is YcgL domain-containing protein Psyc_0800 of Psychrobacter arcticus (strain DSM 17307 / VKM B-2377 / 273-4).